The sequence spans 926 residues: OTU domain-containing protein 7A (926 aa).

The tract at residues 75–99 is disordered; that stretch reads PHVFNEGRGPKQPEREPQPGHKVER. A compositionally biased stretch (basic and acidic residues) spans 82 to 99; the sequence is RGPKQPEREPQPGHKVER. Phosphoserine is present on serine 119. Residues 168-410 form a TRAF-binding region; that stretch reads ERDLIEQATM…AVDPGKDWEW (243 aa). The segment at 183-449 is catalytic; the sequence is AGRLNWWSTV…VTWIRIPSET (267 aa). In terms of domain architecture, OTU spans 199–374; the sequence is LLPLATTGDG…QAHFSALVSM (176 aa). Aspartate 207 is a catalytic residue. Cysteine 210 functions as the Nucleophile in the catalytic mechanism. Histidine 367 functions as the Proton acceptor in the catalytic mechanism. Disordered regions lie at residues 452 to 514, 537 to 613, and 668 to 768; these read PLAQ…DSVA, GLVH…DAWK, and EQEQ…APAR. The span at 481–491 shows a compositional bias: low complexity; it reads VCSNSNSNNGK. Positions 492–510 are enriched in basic and acidic residues; that stretch reads NGKDKEKEKQRKEKDKTRA. Positions 494–509 match the Nuclear localization signal motif; it reads KDKEKEKQRKEKDKTR. 3 stretches are compositionally biased toward low complexity: residues 576-592, 677-691, and 729-742; these read GASA…PSPT, ATAA…AATA, and PAAG…AGGT. Arginine 880 is modified (omega-N-methylarginine). Residues 884–919 form an A20-type zinc finger; it reads GPVQRRCQRENCAFYGRAETEHYCSYCYREELRRRR. Zn(2+) contacts are provided by cysteine 890, cysteine 895, cysteine 907, and cysteine 910.

The protein belongs to the peptidase C64 family.

The protein resides in the cytoplasm. It is found in the nucleus. It carries out the reaction Thiol-dependent hydrolysis of ester, thioester, amide, peptide and isopeptide bonds formed by the C-terminal Gly of ubiquitin (a 76-residue protein attached to proteins as an intracellular targeting signal).. Deubiquitinase, which cleaves 'Lys-11'-linked polyubiquitin chains. Might be required for PA28-20S proteasome assembly. This Homo sapiens (Human) protein is OTU domain-containing protein 7A (OTUD7A).